A 106-amino-acid chain; its full sequence is Cuticle protein CP14.6 (106 aa).

The first 16 residues, 1-16, serve as a signal peptide directing secretion; sequence MKSFFVVALLVAAAAA. The Chitin-binding type R&amp;R domain occupies 37 to 106; it reads PQHYSYSVET…PQGAHLPVAA (70 aa).

In terms of biological role, component of the cuticle of tobacco hornworm. This chain is Cuticle protein CP14.6 (CP14.6), found in Manduca sexta (Tobacco hawkmoth).